The primary structure comprises 432 residues: EF-hand calcium-binding domain-containing protein 3 (432 aa).

EF-hand domains are found at residues 45–80 and 81–116; these read AQLE…LGMN and LNTY…KKLF. Ca(2+) is bound by residues Asp-94, Asp-96, Asp-98, Lys-100, and Asp-105. At Tyr-273 the chain carries Phosphotyrosine. The disordered stretch occupies residues 394 to 432; that stretch reads SMNKSSPSNSGLSSPSDFSESDPETGRKRKRKSSRGFRQ. Residues 395–411 show a composition bias toward low complexity; that stretch reads MNKSSPSNSGLSSPSDF. Over residues 420–432 the composition is skewed to basic residues; it reads RKRKRKSSRGFRQ.

This is EF-hand calcium-binding domain-containing protein 3 (Efcab3) from Mus musculus (Mouse).